The primary structure comprises 198 residues: MFHLVKGLYNNWNKKEQYSILILGLDNAGKTTFLETLKKEYSLAFKALEKIQPTVGQNVATIPVDSKQILKFWDVGGQESLRSMWSEYYSLCHGIIFIVDSSDRERLDECSTTLQSVVMDEEIEGVPILMLANKQDRQDRMEVQDIKEVFNKIAEHISARDSRVLPISALTGEGVKDAIEWMIVRLERNKKSRPPIYK.

Met-1 bears the N-acetylmethionine mark. 24–31 provides a ligand contact to GTP; the sequence is GLDNAGKT. Residue Lys-50 forms a Glycyl lysine isopeptide (Lys-Gly) (interchain with G-Cter in ubiquitin) linkage. GTP-binding positions include 74–78 and 133–136; these read DVGGQ and NKQD.

The protein belongs to the small GTPase superfamily. Arf family. As to quaternary structure, interacts with SYS1 and SLO1.

It is found in the golgi apparatus. Involved in the targeting of ARL1 to the Golgi. Can bind and hydrolyze GTP. The protein is ADP-ribosylation factor-like protein 3 (ARL3) of Saccharomyces cerevisiae (strain ATCC 204508 / S288c) (Baker's yeast).